The chain runs to 953 residues: Coatomer subunit beta (953 aa).

T2 is modified (N-acetylthreonine). HEAT repeat units follow at residues 96–131 (HEMI…KEAE), 132–168 (LLEP…NFEH), 240–276 (SERA…SAPT), 277–314 (AIKA…HPAH), 316–353 (RVLQ…SRNV), and 396–433 (DMAA…RFDN). Residue K494 is modified to N6-acetyllysine.

Oligomeric complex that consists of at least the alpha, beta, beta', gamma, delta, epsilon and zeta subunits. Interacts with ARF1 (myristoylated); this interaction is required for binding of COPB1 to Golgi membranes. Interacts with CAPN8 and PRKCE. Interacts with SCYL1. Interacts with COPG1. Interacts (via trunk domain) with ARF1 (via switch I region); the interaction is direct. Interacts with KCNK2 (via N-terminus); this interaction increases the channel-mediated whole cell currents and promotes plasma membrane expression of KCNK2. Interacts with STX17. Interacts with TMEM115. Interacts with TMEM41B. In terms of processing, proteolytically cleaved between Ser-528 and Ser-529 by CAPN8.

It is found in the cytoplasm. The protein resides in the cytosol. Its subcellular location is the golgi apparatus membrane. It localises to the cytoplasmic vesicle. The protein localises to the COPI-coated vesicle membrane. It is found in the cell membrane. The protein resides in the endoplasmic reticulum-Golgi intermediate compartment. The coatomer is a cytosolic protein complex that binds to dilysine motifs and reversibly associates with Golgi non-clathrin-coated vesicles, which further mediate biosynthetic protein transport from the ER, via the Golgi up to the trans Golgi network. Coatomer complex is required for budding from Golgi membranes, and is essential for the retrograde Golgi-to-ER transport of dilysine-tagged proteins. In mammals, the coatomer can only be recruited by membranes associated to ADP-ribosylation factors (ARFs), which are small GTP-binding proteins; the complex also influences the Golgi structural integrity, as well as the processing, activity, and endocytic recycling of LDL receptors. Involved in the Golgi disassembly and reassembly processes during cell cycle. Plays a functional role in facilitating the transport of kappa-type opioid receptor mRNAs into axons and enhances translation of these proteins. Required for limiting lipid storage in lipid droplets. Involved in lipid homeostasis by regulating the presence of perilipin family members PLIN2 and PLIN3 at the lipid droplet surface and promoting the association of adipocyte surface triglyceride lipase (PNPLA2) with the lipid droplet to mediate lipolysis. Involved in autophagy by playing a role in early endosome function. Plays a role in organellar compartmentalization of secretory compartments including endoplasmic reticulum (ER)-Golgi intermediate compartment (ERGIC), Golgi, trans-Golgi network (TGN) and recycling endosomes, and in biosynthetic transport of CAV1. This chain is Coatomer subunit beta (COPB1), found in Bos taurus (Bovine).